The following is a 587-amino-acid chain: ASI1-immunoprecipitated protein 3 (587 aa).

Residues 1 to 118 form a disordered region; sequence MVLSRRFAQV…NVTGKGKGKR (118 aa). Positions 66–98 are enriched in acidic residues; sequence EDEDMAEGDDDQAEEETNPEAEEEEDEEEEEKP. A BAH domain is found at 129-248; that stretch reads NTYDLEVPVL…TVEKKLWKLT (120 aa). A TFIIS central domain is found at 344–493; sequence HRDKCLGKLL…RMQMTSVRCS (150 aa). 2 disordered regions span residues 371 to 396 and 539 to 587; these read EAKV…GKDE and TDKP…KKPE. The segment covering 560–570 has biased composition (basic and acidic residues); it reads ETNKPKDEALK. Positions 571 to 581 are enriched in polar residues; sequence TNDSNADNNPE.

In terms of assembly, interacts with MOM1. Component of the ASI1-AIPP1-EDM2 (AAE) RNA regulatory complex composed of at least AIPP1/EDM3, ASI1 and EDM2 and may contain CPL2, AIPP2 and AIPP3/BDT1. Part of the BAH-PHD bivalent histone reader complex that contains AIPP2, PAIPP2 and AIPP3/BDT1; the BAH-PHD module associates with CPL2 to form the BAH-PHD-CPL2 complex (BPC) for transcriptional repression. Binds directly to CPL2, PHD1, PAIPP2/PHD2, AIPP2/PHD3, PHD4, PHD5 and PHD6. In terms of tissue distribution, expressed ubiquitously.

The protein resides in the nucleus. Its function is as follows. Transcriptional repressor. Together with PHD finger-containing proteins (e.g. PHD1, PAIPP2/PHD2, AIPP2/PHD3, PHD4, PHD5 and PHD6), cooperates to form a BAH-PHD bivalent histone reader complex able to read histone H3 lysine 27 trimethylation (H3K27me3) and low-methylated H3K4 histone marks in order to regulate transcription, especially to prevent early flowering; H3K27me3 reader of this complex. CPL2 is subsequently recruited to form a BAH-PHD-CPL2 complex (BPC) in order to silence several H3K27me3 and low-methylated H3K4 enriched loci, including AGO5, via the phosphorylation state-dependent inhibition of Pol II release from the transcriptional start site (e.g. Ser5P-Pol II dephosphorylation). The BPC complex represses flowering by inhibiting the expression of several genes, including AGL6, FT, FUL and SOC1. Prevents the accumulation of intronic heterochromatin-containing genes (e.g. IBM1, At3g05410 and RPP7). Seems to not be involved in vernalization establishment, by contrast to orthologs in grass plants. This chain is ASI1-immunoprecipitated protein 3, found in Arabidopsis thaliana (Mouse-ear cress).